Here is a 499-residue protein sequence, read N- to C-terminus: MSLRLTNTLTRRTEPFTPLKDGHVSIYCCGVTVYDLCHLGHARSYIAWDVLRRYLLWRGYSVTFVQNFTDIDDKILKRAAEKKCSMEHISEQNIEAFHQDMDALGILRPDRMPRATQCLDGIRALIGELETSGAAYSVDGDVYFAVMKHHGYGKLSGRDLNEQQQNADGRVADAEEARKQHSFDFALWKGAKTGEPSFPSPWGAGRPGWHIECSAMVREELGETIDIHLGGADLIFPHHENEIAQSEAATGKQLARYWLHNGMVNVGGQKMSKSLGNFTTIRALLESGVSPMTLRLFILQAHYRKPLDFTADAINAAATGWKGLNAALGLGNIYAEALNWPECKPLPQEVMQPAHSSTLEQCSEIRQHFIDALDDDLNSSGAIAVLFDLARPLRALANRLERGDTKAIQETAQLNLLPRWQLLVELANVLGLEAEKAAKLAPEGNNRVDENHIQLAIAARKEAKAARDFAKADRIRDELRAQGIELIDKPGGLTDWISS.

C29 provides a ligand contact to Zn(2+). Residues 31 to 41 carry the 'HIGH' region motif; it reads VTVYDLCHLGH. Positions 213, 238, and 242 each coordinate Zn(2+). The 'KMSKS' region motif lies at 270–274; the sequence is KMSKS. K273 lines the ATP pocket.

This sequence belongs to the class-I aminoacyl-tRNA synthetase family. In terms of assembly, monomer. Zn(2+) is required as a cofactor.

The protein localises to the cytoplasm. It catalyses the reaction tRNA(Cys) + L-cysteine + ATP = L-cysteinyl-tRNA(Cys) + AMP + diphosphate. This is Cysteine--tRNA ligase from Prochlorococcus marinus (strain MIT 9303).